The primary structure comprises 253 residues: tRNA pseudouridine synthase A (253 aa).

Aspartate 53 serves as the catalytic Nucleophile. Position 112 (tyrosine 112) interacts with substrate.

This sequence belongs to the tRNA pseudouridine synthase TruA family. As to quaternary structure, homodimer.

The enzyme catalyses uridine(38/39/40) in tRNA = pseudouridine(38/39/40) in tRNA. Functionally, formation of pseudouridine at positions 38, 39 and 40 in the anticodon stem and loop of transfer RNAs. The chain is tRNA pseudouridine synthase A from Lactococcus lactis subsp. lactis (strain IL1403) (Streptococcus lactis).